A 337-amino-acid chain; its full sequence is Delta-aminolevulinic acid dehydratase (337 aa).

The active-site Schiff-base intermediate with substrate is K205. Residues R215 and K229 each contribute to the 5-aminolevulinate site. Mg(2+) is bound at residue E245. Residue K260 is the Schiff-base intermediate with substrate of the active site. 5-aminolevulinate contacts are provided by S286 and Y324.

It belongs to the ALAD family. Homooctamer; formed by oligomerization of dimers. Mg(2+) is required as a cofactor.

The enzyme catalyses 2 5-aminolevulinate = porphobilinogen + 2 H2O + H(+). The protein operates within porphyrin-containing compound metabolism; protoporphyrin-IX biosynthesis; coproporphyrinogen-III from 5-aminolevulinate: step 1/4. Stimulated by magnesium ions. In terms of biological role, catalyzes an early step in the biosynthesis of tetrapyrroles. Binds two molecules of 5-aminolevulinate per subunit, each at a distinct site, and catalyzes their condensation to form porphobilinogen. The sequence is that of Delta-aminolevulinic acid dehydratase (hemB) from Pseudomonas aeruginosa (strain ATCC 15692 / DSM 22644 / CIP 104116 / JCM 14847 / LMG 12228 / 1C / PRS 101 / PAO1).